The following is a 202-amino-acid chain: Ras-related protein RIC1 (202 aa).

Residues glycine 15–cysteine 23, tyrosine 33–threonine 40, aspartate 63–glutamine 67, asparagine 121–aspartate 124, and serine 151–lysine 153 each bind GTP. An Effector region motif is present at residues tyrosine 37–phenylalanine 45. The span at alanine 174–alanine 185 shows a compositional bias: polar residues. The disordered stretch occupies residues alanine 174–serine 202. 2 S-geranylgeranyl cysteine lipidation sites follow: cysteine 200 and cysteine 201.

This sequence belongs to the small GTPase superfamily. Rab family.

The protein localises to the cell membrane. Functionally, possesses GTPase activity. In Oryza sativa subsp. japonica (Rice), this protein is Ras-related protein RIC1 (RIC1).